The sequence spans 396 residues: S-adenosylmethionine synthase (396 aa).

Position 14 (His-14) interacts with ATP. A Mg(2+)-binding site is contributed by Asp-16. Glu-42 provides a ligand contact to K(+). The L-methionine site is built by Glu-55 and Gln-98. The tract at residues 98-108 is flexible loop; sequence QSPDIAMGVDK. Residues 174–176, 240–241, Asp-249, 255–256, Ala-272, and Lys-276 contribute to the ATP site; these read DGK, RF, and RK. Asp-249 provides a ligand contact to L-methionine. Residue Lys-280 coordinates L-methionine.

The protein belongs to the AdoMet synthase family. As to quaternary structure, homotetramer; dimer of dimers. Mg(2+) is required as a cofactor. The cofactor is K(+).

The protein localises to the cytoplasm. The enzyme catalyses L-methionine + ATP + H2O = S-adenosyl-L-methionine + phosphate + diphosphate. It participates in amino-acid biosynthesis; S-adenosyl-L-methionine biosynthesis; S-adenosyl-L-methionine from L-methionine: step 1/1. Its function is as follows. Catalyzes the formation of S-adenosylmethionine (AdoMet) from methionine and ATP. The overall synthetic reaction is composed of two sequential steps, AdoMet formation and the subsequent tripolyphosphate hydrolysis which occurs prior to release of AdoMet from the enzyme. This Caldicellulosiruptor saccharolyticus (strain ATCC 43494 / DSM 8903 / Tp8T 6331) protein is S-adenosylmethionine synthase.